Reading from the N-terminus, the 143-residue chain is UPF0201 protein Pisl_1658 (143 aa).

This sequence belongs to the UPF0201 family.

The protein is UPF0201 protein Pisl_1658 of Pyrobaculum islandicum (strain DSM 4184 / JCM 9189 / GEO3).